Reading from the N-terminus, the 111-residue chain is MAKHHPDLIFCRKQPGVAIGRLCEKDDGKCVICDSYVRPCTLVRICDECNYGSYQGRCVICGGPGVSDAYYCKSCTIQEKDRDGCPKIVNLGSSKTDLFYERKKYGFKQNY.

This sequence belongs to the PHF5 family.

This chain is PHD finger-like domain-containing protein 5A, found in Drosophila melanogaster (Fruit fly).